A 912-amino-acid polypeptide reads, in one-letter code: Glutamate receptor 3.2 (912 aa).

An N-terminal signal peptide occupies residues 1–22 (MFWVLVLLSFIVLIGDGMISEG). Residues 23 to 587 (AGLRPRYVDV…TPWAFLRPFT (565 aa)) are Extracellular-facing. 7 N-linked (GlcNAc...) asparagine glycosylation sites follow: Asn-306, Asn-338, Asn-378, Asn-417, Asn-435, Asn-445, and Asn-532. Residues 544–546 (DIA) and Arg-551 contribute to the glycine site. L-methionine-binding positions include 544-546 (DIA) and Arg-551. The chain crosses the membrane as a helical span at residues 588–608 (PPMWAVTAAFFLIVGSVIWIL). The Cytoplasmic portion of the chain corresponds to 609–617 (EHRINDEFR). A helical membrane pass occupies residues 618–638 (GPPRKQIVTILWFSFSTMFFS). At 639–649 (HRENTVSTLGR) the chain is on the cytoplasmic side. Residues 650 to 670 (AVLLIWLFVVLIITSSYTASL) form a helical membrane-spanning segment. Residues 671 to 828 (TSILTVQQLN…EDSEQLKLRS (158 aa)) are Extracellular-facing. Residue Tyr-703 coordinates glycine. Tyr-703 lines the L-methionine pocket. A glycan (N-linked (GlcNAc...) asparagine) is linked at Asn-734. 743–746 (ERPY) contacts glycine. 743–746 (ERPY) lines the L-methionine pocket. An intrachain disulfide couples Cys-755 to Cys-809. Residues Asn-808 and Asn-813 are each glycosylated (N-linked (GlcNAc...) asparagine). A helical transmembrane segment spans residues 829 to 849 (FWGLFLVCGISCFIALFIYFF). Over 850–912 (KIVRDFFRHG…DLSLKPSRPI (63 aa)) the chain is Cytoplasmic. The interval 888–912 (KEDESKRRMKRKRNDDLSLKPSRPI) is disordered.

This sequence belongs to the glutamate-gated ion channel (TC 1.A.10.1) family. In terms of assembly, forms a heteromeric channel with GLR3.4. In terms of tissue distribution, expressed in leaves and siliques, and at lower level in flowers and roots. Detected in the vascular tissues of both shoots and roots. Expressed in root phloem.

The protein resides in the cell membrane. Glutamate-gated receptor that probably acts as a non-selective cation channel. May be involved in light-signal transduction and calcium homeostasis via the regulation of calcium influx into cells. Could play a role in calcium unloading from the xylem vessels. Acts as a negative regulator of lateral root initiation and development. May restrict primordia numbers and position along the root axis by a signaling process originating in the phloem. The sequence is that of Glutamate receptor 3.2 from Arabidopsis thaliana (Mouse-ear cress).